The primary structure comprises 609 residues: Threonine--tRNA ligase (609 aa).

Residues 215 to 506 are catalytic; that stretch reads DHRIIGNEMK…LIEHTAGELP (292 aa). Zn(2+) contacts are provided by Cys307, His358, and His483.

It belongs to the class-II aminoacyl-tRNA synthetase family. In terms of assembly, homodimer. The cofactor is Zn(2+).

Its subcellular location is the cytoplasm. It catalyses the reaction tRNA(Thr) + L-threonine + ATP = L-threonyl-tRNA(Thr) + AMP + diphosphate + H(+). Functionally, catalyzes the attachment of threonine to tRNA(Thr) in a two-step reaction: L-threonine is first activated by ATP to form Thr-AMP and then transferred to the acceptor end of tRNA(Thr). Also edits incorrectly charged L-seryl-tRNA(Thr). The chain is Threonine--tRNA ligase from Campylobacter hominis (strain ATCC BAA-381 / DSM 21671 / CCUG 45161 / LMG 19568 / NCTC 13146 / CH001A).